The sequence spans 91 residues: Small ribosomal subunit protein uS19 (91 aa).

It belongs to the universal ribosomal protein uS19 family.

In terms of biological role, protein S19 forms a complex with S13 that binds strongly to the 16S ribosomal RNA. This is Small ribosomal subunit protein uS19 from Prochlorococcus marinus subsp. pastoris (strain CCMP1986 / NIES-2087 / MED4).